The chain runs to 103 residues: Co-chaperonin GroES (103 aa).

This sequence belongs to the GroES chaperonin family. Heptamer of 7 subunits arranged in a ring. Interacts with the chaperonin GroEL.

The protein resides in the plastid. Its subcellular location is the cyanelle. In terms of biological role, together with the chaperonin GroEL, plays an essential role in assisting protein folding. The GroEL-GroES system forms a nano-cage that allows encapsulation of the non-native substrate proteins and provides a physical environment optimized to promote and accelerate protein folding. GroES binds to the apical surface of the GroEL ring, thereby capping the opening of the GroEL channel. The polypeptide is Co-chaperonin GroES (Cyanophora paradoxa).